The following is a 266-amino-acid chain: Undecaprenyl-diphosphatase (266 aa).

The next 8 helical transmembrane spans lie at 1-21 (MDTF…FLPI), 39-59 (QGLS…VMYF), 87-107 (WWII…KDFI), 111-131 (FRSI…LWWA), 144-164 (VGWK…IPGT), 183-203 (AAAR…AILV), 218-238 (ALGL…HYFL), and 246-266 (MTPF…IIFL).

The protein belongs to the UppP family.

It is found in the cell inner membrane. It carries out the reaction di-trans,octa-cis-undecaprenyl diphosphate + H2O = di-trans,octa-cis-undecaprenyl phosphate + phosphate + H(+). Its function is as follows. Catalyzes the dephosphorylation of undecaprenyl diphosphate (UPP). Confers resistance to bacitracin. In Shewanella pealeana (strain ATCC 700345 / ANG-SQ1), this protein is Undecaprenyl-diphosphatase.